Here is a 368-residue protein sequence, read N- to C-terminus: Branched-chain-amino-acid aminotransferase (368 aa).

Position 101 (R101) interacts with pyridoxal 5'-phosphate. Position 204 is an N6-(pyridoxal phosphate)lysine (K204). Pyridoxal 5'-phosphate is bound by residues Y209, I271–T272, and T314.

The protein belongs to the class-IV pyridoxal-phosphate-dependent aminotransferase family. As to quaternary structure, homodimer. The cofactor is pyridoxal 5'-phosphate.

It catalyses the reaction L-leucine + 2-oxoglutarate = 4-methyl-2-oxopentanoate + L-glutamate. It carries out the reaction L-isoleucine + 2-oxoglutarate = (S)-3-methyl-2-oxopentanoate + L-glutamate. The catalysed reaction is L-valine + 2-oxoglutarate = 3-methyl-2-oxobutanoate + L-glutamate. Its pathway is amino-acid biosynthesis; L-isoleucine biosynthesis; L-isoleucine from 2-oxobutanoate: step 4/4. The protein operates within amino-acid biosynthesis; L-leucine biosynthesis; L-leucine from 3-methyl-2-oxobutanoate: step 4/4. It functions in the pathway amino-acid biosynthesis; L-valine biosynthesis; L-valine from pyruvate: step 4/4. Functionally, catalyzes the reversible transfers of an amino group from glutamate to the alpha-ketoacid of the respective amino acid in the final step in the biosynthesis of branchedchain amino acids. This chain is Branched-chain-amino-acid aminotransferase (ilvE), found in Mycobacterium tuberculosis (strain CDC 1551 / Oshkosh).